Reading from the N-terminus, the 109-residue chain is MTNLLNKSLEENGSFLTAVYIFVGFVALYLLGRALQAFVQAADACCLFWYTWVVVPGAKGTAFVYNHTYGKKLNKPELEAVVVNEFPKNGWNNKNPANFQDVQRNKLYS.

The Virion surface portion of the chain corresponds to Met1 to Glu11. A helical transmembrane segment spans residues Asn12–Gly32. The Intravirion segment spans residues Arg33–Ser109. The interval Asn89 to Ser109 is disordered. Residues Gly90–Ser109 show a composition bias toward polar residues.

The protein belongs to the gammacoronaviruses E protein family. As to quaternary structure, homooligomer. Interacts with the M membrane protein in the budding compartment of the host cell, which is located between endoplasmic reticulum and the Golgi complex. The cytoplasmic tails of both proteins are important for this function. Interacts with Nucleoprotein.

The protein localises to the host Golgi apparatus membrane. Plays a central role in virus morphogenesis and assembly. Acts as a viroporin and self-assembles in host membranes forming pentameric protein-lipid pores that allow ion transport. Also plays a role in the induction of apoptosis. This is Envelope small membrane protein from Avian infectious bronchitis virus (strain KB8523) (IBV).